Reading from the N-terminus, the 195-residue chain is Small ribosomal subunit protein uS4c (195 aa).

An S4 RNA-binding domain is found at 82–143 (MRLDNILFRL…KQRSKALIQN (62 aa)).

It belongs to the universal ribosomal protein uS4 family. In terms of assembly, part of the 30S ribosomal subunit. Contacts protein S5. The interaction surface between S4 and S5 is involved in control of translational fidelity.

It localises to the plastid. The protein resides in the chloroplast. One of the primary rRNA binding proteins, it binds directly to 16S rRNA where it nucleates assembly of the body of the 30S subunit. Its function is as follows. With S5 and S12 plays an important role in translational accuracy. This Gladiolus murielae (Abyssinian gladiolus) protein is Small ribosomal subunit protein uS4c (rps4).